The primary structure comprises 133 residues: Fatty acid-binding protein homolog 1 (133 aa).

Position 1 is an N-acetylmethionine (Met1). Residues Arg107 and 127–129 (RTY) each bind hexadecanoate.

Belongs to the calycin superfamily. Fatty-acid binding protein (FABP) family.

In terms of biological role, has been implicated in the acquisition, storage, and transport of lipids, and may be important to the organism since it is incapable of synthesizing most of its lipids de novo. This Echinococcus granulosus (Hydatid tapeworm) protein is Fatty acid-binding protein homolog 1 (FABP1).